The sequence spans 215 residues: 16S rRNA (adenine(1408)-N(1))-methyltransferase (215 aa).

Residues G32, D55, 87 to 88 (AE), 102 to 107 (LMPWGS), and 191 to 193 (TSW) contribute to the S-adenosyl-L-methionine site.

It belongs to the methyltransferase superfamily. Kanamycin-apramycin resistance family.

The catalysed reaction is adenosine(1408) in 16S rRNA + S-adenosyl-L-methionine = N(1)-methyladenosine(1408) in 16S rRNA + S-adenosyl-L-homocysteine + H(+). Its function is as follows. Specifically methylates the N(1) position of adenine 1408 in 16S rRNA. Confers resistance to various aminoglycosides, including kanamycin, neomycin and apramycin. This Streptoalloteichus tenebrarius (strain ATCC 17920 / DSM 40477 / JCM 4838 / CBS 697.72 / NBRC 16177 / NCIMB 11028 / NRRL B-12390 / A12253. 1 / ISP 5477) (Streptomyces tenebrarius) protein is 16S rRNA (adenine(1408)-N(1))-methyltransferase (kamB).